Here is a 491-residue protein sequence, read N- to C-terminus: Probable diguanylate cyclase CdgI (491 aa).

Topologically, residues 1-54 (MIQSTRISMGLFFKYFLSLTKIDPGQNYISLPSIKSSTHIALLFMVSMGTQKLK) are cytoplasmic. Residues 55–75 (AQSFFIFSLLLTLILFCITTL) form a helical membrane-spanning segment. At 76 to 89 (YNENTNVKLIPQMN) the chain is on the periplasmic side. The chain crosses the membrane as a helical span at residues 90 to 110 (YLMVVVALFFLNAVIFLFMLM). Topologically, residues 111–121 (KYFTNKQILPT) are cytoplasmic. The helical transmembrane segment at 122–142 (LILSLAFLSGLIYLVETIVII) threads the bilayer. Over 143–158 (HKPINGSTLIQTKSND) the chain is Periplasmic. A helical transmembrane segment spans residues 159-179 (VSIFYIFRQLSFICLTSLALF). Topologically, residues 180–193 (CYGKDNILDNNKKK) are cytoplasmic. The chain crosses the membrane as a helical span at residues 194-214 (TGILLLALIPFLVFPLLAHNL). Topologically, residues 215–236 (SSYNADYSLYVVDYCPDNHTAT) are periplasmic. Residues 237 to 257 (WGINYTKILVCLWAFLLFFII) form a helical membrane-spanning segment. The Cytoplasmic portion of the chain corresponds to 258–265 (MRTRLASE). A helical transmembrane segment spans residues 266–286 (LWPLIALLCLASLCCNLLLLT). At 287 to 293 (LDEYNYT) the chain is on the periplasmic side. A helical membrane pass occupies residues 294-314 (IWYISRGIEVSSKLFVVSFLI). At 315-491 (YNIFQELQLS…GGNKVIIHHI (177 aa)) the chain is on the cytoplasmic side. A GGDEF domain is found at 356–491 (KDFCVMLVDI…GGNKVIIHHI (136 aa)). Mg(2+) contacts are provided by Asp364 and Ile365. Residues Asn372, His377, and Asp381 each coordinate substrate. Glu407 provides a ligand contact to Mg(2+). Glu407 functions as the Proton acceptor in the catalytic mechanism. Substrate is bound at residue Arg427.

In terms of assembly, homodimer. Mg(2+) is required as a cofactor.

Its subcellular location is the cell inner membrane. The catalysed reaction is 2 GTP = 3',3'-c-di-GMP + 2 diphosphate. Its pathway is purine metabolism; 3',5'-cyclic di-GMP biosynthesis. In terms of biological role, catalyzes the synthesis of cyclic-di-GMP (c-di-GMP) via the condensation of 2 GTP molecules. The chain is Probable diguanylate cyclase CdgI from Escherichia coli (strain K12).